Here is a 266-residue protein sequence, read N- to C-terminus: Putative carbamate hydrolase RutD (266 aa).

Belongs to the AB hydrolase superfamily. Hydrolase RutD family.

It carries out the reaction carbamate + 2 H(+) = NH4(+) + CO2. In terms of biological role, involved in pyrimidine catabolism. May facilitate the hydrolysis of carbamate, a reaction that can also occur spontaneously. This chain is Putative carbamate hydrolase RutD, found in Escherichia coli O7:K1 (strain IAI39 / ExPEC).